The primary structure comprises 121 residues: LOB domain-containing protein 24 (121 aa).

The LOB domain maps to lysine 4 to isoleucine 105.

Belongs to the LOB domain-containing protein family.

This is LOB domain-containing protein 24 (LBD24) from Arabidopsis thaliana (Mouse-ear cress).